The primary structure comprises 239 residues: Ribosomal RNA large subunit methyltransferase E (239 aa).

A disordered region spans residues 1-20; that stretch reads MTKAPIAGNRTGRKLGQRVK. Residues 11-20 show a composition bias toward basic residues; it reads TGRKLGQRVK. Glycine 81, tryptophan 83, aspartate 104, aspartate 120, and aspartate 144 together coordinate S-adenosyl-L-methionine. Lysine 184 functions as the Proton acceptor in the catalytic mechanism.

It belongs to the class I-like SAM-binding methyltransferase superfamily. RNA methyltransferase RlmE family.

The protein resides in the cytoplasm. It catalyses the reaction uridine(2552) in 23S rRNA + S-adenosyl-L-methionine = 2'-O-methyluridine(2552) in 23S rRNA + S-adenosyl-L-homocysteine + H(+). Its function is as follows. Specifically methylates the uridine in position 2552 of 23S rRNA at the 2'-O position of the ribose in the fully assembled 50S ribosomal subunit. The polypeptide is Ribosomal RNA large subunit methyltransferase E (Rhizobium johnstonii (strain DSM 114642 / LMG 32736 / 3841) (Rhizobium leguminosarum bv. viciae)).